Consider the following 396-residue polypeptide: MIIEPRMRGFICLTAHPAGCEQNVKNQIEYIKSKGAIAGAKKVLVIGASTGFGLASRITSAFGSDAATIGVFFEKPPVEGKTASPGWYNSAAFEKEAHKAGLYAKSINGDAFSNEIKRETLDLIKADLGQVDLVIYSLASPVRTNPNTGVTHRSVLKPIGQTFTNKTVDFHTGNVSEVSIAPANEEDIENTVAVMGGEDWAMWIDALKNENLLAEGATTIAYSYIGPELTEAVYRKGTIGRAKDHLEATAFTITDTLKSLGGKAYVSVNKALVTQASSAIPVIPLYISLLYKIMKEEGIHEGCIEQIQRLFQDRLYNGSEVPVDEKGRIRIDDWEMREDVQAKVAALWKEATTETLPSIGDLAGYRNDFLNLFGFEFAGVDYKADTNEVVNIESIK.

NAD(+) is bound by residues 47 to 52, 73 to 74, 110 to 111, and 138 to 139; these read GASTGF, FE, DA, and LA. A substrate-binding site is contributed by Tyr224. The active-site Proton donor is the Tyr234. NAD(+) is bound by residues Lys243 and 272 to 274; that span reads LVT.

The protein belongs to the TER reductase family. As to quaternary structure, monomer.

The enzyme catalyses a 2,3-saturated acyl-[ACP] + NAD(+) = a (2E)-enoyl-[ACP] + NADH + H(+). The protein operates within lipid metabolism; fatty acid biosynthesis. Functionally, involved in the final reduction of the elongation cycle of fatty acid synthesis (FAS II). Catalyzes the reduction of a carbon-carbon double bond in an enoyl moiety that is covalently linked to an acyl carrier protein (ACP). This is Enoyl-[acyl-carrier-protein] reductase [NADH] from Flavobacterium johnsoniae (strain ATCC 17061 / DSM 2064 / JCM 8514 / BCRC 14874 / CCUG 350202 / NBRC 14942 / NCIMB 11054 / UW101) (Cytophaga johnsonae).